A 422-amino-acid chain; its full sequence is UDP-N-acetylmuramoylalanine--D-glutamate ligase (422 aa).

102–108 (GTNGKTT) is a binding site for ATP.

The protein belongs to the MurCDEF family.

It localises to the cytoplasm. It carries out the reaction UDP-N-acetyl-alpha-D-muramoyl-L-alanine + D-glutamate + ATP = UDP-N-acetyl-alpha-D-muramoyl-L-alanyl-D-glutamate + ADP + phosphate + H(+). It functions in the pathway cell wall biogenesis; peptidoglycan biosynthesis. Cell wall formation. Catalyzes the addition of glutamate to the nucleotide precursor UDP-N-acetylmuramoyl-L-alanine (UMA). The protein is UDP-N-acetylmuramoylalanine--D-glutamate ligase of Helicobacter pylori (strain J99 / ATCC 700824) (Campylobacter pylori J99).